Consider the following 133-residue polypeptide: Fluoride-specific ion channel FluC (133 aa).

4 consecutive transmembrane segments (helical) span residues 12–32, 41–61, 76–96, and 104–124; these read LAMT…ASLI, WGTL…LVWL, IVGV…CLVF, and MIGI…VAGA. Positions 81 and 84 each coordinate Na(+).

Belongs to the fluoride channel Fluc/FEX (TC 1.A.43) family.

It is found in the cell inner membrane. The enzyme catalyses fluoride(in) = fluoride(out). With respect to regulation, na(+) is not transported, but it plays an essential structural role and its presence is essential for fluoride channel function. In terms of biological role, fluoride-specific ion channel. Important for reducing fluoride concentration in the cell, thus reducing its toxicity. This chain is Fluoride-specific ion channel FluC, found in Xanthomonas euvesicatoria pv. vesicatoria (strain 85-10) (Xanthomonas campestris pv. vesicatoria).